We begin with the raw amino-acid sequence, 130 residues long: Large ribosomal subunit protein bL12 (130 aa).

This sequence belongs to the bacterial ribosomal protein bL12 family. Homodimer. Part of the ribosomal stalk of the 50S ribosomal subunit. Forms a multimeric L10(L12)X complex, where L10 forms an elongated spine to which 2 to 4 L12 dimers bind in a sequential fashion. Binds GTP-bound translation factors.

Forms part of the ribosomal stalk which helps the ribosome interact with GTP-bound translation factors. Is thus essential for accurate translation. In Yersinia pestis bv. Antiqua (strain Angola), this protein is Large ribosomal subunit protein bL12.